A 216-amino-acid chain; its full sequence is Cytidylate kinase (216 aa).

10–18 (GPAAAGKST) is a binding site for ATP.

The protein belongs to the cytidylate kinase family. Type 1 subfamily.

It is found in the cytoplasm. The catalysed reaction is CMP + ATP = CDP + ADP. It catalyses the reaction dCMP + ATP = dCDP + ADP. The sequence is that of Cytidylate kinase from Macrococcus caseolyticus (strain JCSC5402) (Macrococcoides caseolyticum).